The chain runs to 137 residues: Small ribosomal subunit protein uS12 (137 aa).

Residues 1-26 form a disordered region; sequence MPTINQLVRKPRQSKIKKSTSPALNK. The span at 9-18 shows a compositional bias: basic residues; the sequence is RKPRQSKIKK.

It belongs to the universal ribosomal protein uS12 family. In terms of assembly, part of the 30S ribosomal subunit. Contacts proteins S8 and S17. May interact with IF1 in the 30S initiation complex.

With S4 and S5 plays an important role in translational accuracy. Functionally, interacts with and stabilizes bases of the 16S rRNA that are involved in tRNA selection in the A site and with the mRNA backbone. Located at the interface of the 30S and 50S subunits, it traverses the body of the 30S subunit contacting proteins on the other side and probably holding the rRNA structure together. The combined cluster of proteins S8, S12 and S17 appears to hold together the shoulder and platform of the 30S subunit. In Listeria innocua serovar 6a (strain ATCC BAA-680 / CLIP 11262), this protein is Small ribosomal subunit protein uS12.